The following is a 513-amino-acid chain: Putative ribose/galactose/methyl galactoside import ATP-binding protein 2 (513 aa).

2 consecutive ABC transporter domains span residues 24-260 and 270-510; these read LAAD…VGRE and VPIG…VMDL. 56–63 lines the ATP pocket; sequence GENGAGKS.

It belongs to the ABC transporter superfamily. Carbohydrate importer 2 (CUT2) (TC 3.A.1.2) family.

The protein localises to the cell inner membrane. The catalysed reaction is D-ribose(out) + ATP + H2O = D-ribose(in) + ADP + phosphate + H(+). The enzyme catalyses D-galactose(out) + ATP + H2O = D-galactose(in) + ADP + phosphate + H(+). Its function is as follows. Part of an ABC transporter complex involved in carbohydrate import. Could be involved in ribose, galactose and/or methyl galactoside import. Responsible for energy coupling to the transport system. This chain is Putative ribose/galactose/methyl galactoside import ATP-binding protein 2, found in Agrobacterium fabrum (strain C58 / ATCC 33970) (Agrobacterium tumefaciens (strain C58)).